Consider the following 385-residue polypeptide: Rhomboid domain-containing protein 3 (385 aa).

The next 5 membrane-spanning stretches (helical) occupy residues 13-33, 58-78, 95-115, 146-166, and 168-188; these read ALPL…LLGA, LGHT…TLGW, VLAL…VSGA, WLLP…PPFL, and LLCG…WLEL. The tract at residues 238–264 is disordered; sequence PPYLASSDSWPHSDGSAQLPPRLGPGQ. In terms of domain architecture, UBA spans 322–361; it reads SVSSLRLQQLQHMGFPTEQAAVALAATGRVEGAVSLLVEG.

The protein resides in the membrane. In Mus musculus (Mouse), this protein is Rhomboid domain-containing protein 3 (Rhbdd3).